An 80-amino-acid chain; its full sequence is MRTTLSIDDDVLLAVKERARREKRTAGEILSDLARQALTNQNPQPAASQEDAFHGFEPLPHRGGAVSNALIDRLRDEEAV.

The disordered stretch occupies residues asparagine 40 to asparagine 68.

In terms of biological role, possibly the antitoxin component of a type II toxin-antitoxin (TA) system. Its cognate toxin is VapC44 (Potential). The chain is Putative antitoxin VapB44 (vapB44) from Mycobacterium tuberculosis (strain CDC 1551 / Oshkosh).